The following is a 202-amino-acid chain: Potassium-transporting ATPase KdpC subunit (202 aa).

A helical membrane pass occupies residues 7-27 (PAIFVLLALTLITGLLYPLAM). Residues 66-103 (FHGRPSATSTADPNDSTKTVPAPYNAANSSGSNLGPTS) are disordered. Polar residues-rich tracts occupy residues 71–84 (SATS…STKT) and 91–101 (AANSSGSNLGP).

Belongs to the KdpC family. As to quaternary structure, the system is composed of three essential subunits: KdpA, KdpB and KdpC.

The protein resides in the cell inner membrane. In terms of biological role, part of the high-affinity ATP-driven potassium transport (or Kdp) system, which catalyzes the hydrolysis of ATP coupled with the electrogenic transport of potassium into the cytoplasm. This subunit acts as a catalytic chaperone that increases the ATP-binding affinity of the ATP-hydrolyzing subunit KdpB by the formation of a transient KdpB/KdpC/ATP ternary complex. The protein is Potassium-transporting ATPase KdpC subunit of Bradyrhizobium sp. (strain ORS 278).